Reading from the N-terminus, the 250-residue chain is tRNA (guanine-N(1)-)-methyltransferase (250 aa).

S-adenosyl-L-methionine-binding positions include Gly116 and 136–141; that span reads IGDYVL.

It belongs to the RNA methyltransferase TrmD family. Homodimer.

It is found in the cytoplasm. The enzyme catalyses guanosine(37) in tRNA + S-adenosyl-L-methionine = N(1)-methylguanosine(37) in tRNA + S-adenosyl-L-homocysteine + H(+). Specifically methylates guanosine-37 in various tRNAs. The chain is tRNA (guanine-N(1)-)-methyltransferase from Pseudomonas putida (strain ATCC 47054 / DSM 6125 / CFBP 8728 / NCIMB 11950 / KT2440).